The following is a 94-amino-acid chain: Putative RNA-binding protein RbpD (94 aa).

The RRM domain maps to T2–P79. A disordered region spans residues R73–Y94. The segment covering K78–Y94 has biased composition (basic and acidic residues).

This Nostoc sp. (strain PCC 7120 / SAG 25.82 / UTEX 2576) protein is Putative RNA-binding protein RbpD (rbpD).